Here is a 288-residue protein sequence, read N- to C-terminus: Nucleotide-binding protein Pcar_1935 (288 aa).

11-18 lines the ATP pocket; the sequence is GLSGSGKT. 62–65 contributes to the GTP binding site; sequence DVRN.

It belongs to the RapZ-like family.

Displays ATPase and GTPase activities. This chain is Nucleotide-binding protein Pcar_1935, found in Syntrophotalea carbinolica (strain DSM 2380 / NBRC 103641 / GraBd1) (Pelobacter carbinolicus).